We begin with the raw amino-acid sequence, 320 residues long: Holliday junction branch migration complex subunit RuvB (320 aa).

Residues 1 to 172 (MTANVCLDES…FGIISRLEYY (172 aa)) are large ATPase domain (RuvB-L). ATP contacts are provided by residues Arg-12, Gly-53, Lys-56, Thr-57, Thr-58, 119-121 (EDF), Arg-162, Tyr-172, and Arg-209. Thr-57 lines the Mg(2+) pocket. Positions 173–243 (TPADLARIVA…LASEALGRME (71 aa)) are small ATPAse domain (RuvB-S). Residues 246-320 (ESGLDQMDRK…KAYRHLNLLG (75 aa)) form a head domain (RuvB-H) region. 2 residues coordinate DNA: Arg-301 and Arg-306.

It belongs to the RuvB family. As to quaternary structure, homohexamer. Forms an RuvA(8)-RuvB(12)-Holliday junction (HJ) complex. HJ DNA is sandwiched between 2 RuvA tetramers; dsDNA enters through RuvA and exits via RuvB. An RuvB hexamer assembles on each DNA strand where it exits the tetramer. Each RuvB hexamer is contacted by two RuvA subunits (via domain III) on 2 adjacent RuvB subunits; this complex drives branch migration. In the full resolvosome a probable DNA-RuvA(4)-RuvB(12)-RuvC(2) complex forms which resolves the HJ.

Its subcellular location is the cytoplasm. The catalysed reaction is ATP + H2O = ADP + phosphate + H(+). Functionally, the RuvA-RuvB-RuvC complex processes Holliday junction (HJ) DNA during genetic recombination and DNA repair, while the RuvA-RuvB complex plays an important role in the rescue of blocked DNA replication forks via replication fork reversal (RFR). RuvA specifically binds to HJ cruciform DNA, conferring on it an open structure. The RuvB hexamer acts as an ATP-dependent pump, pulling dsDNA into and through the RuvAB complex. RuvB forms 2 homohexamers on either side of HJ DNA bound by 1 or 2 RuvA tetramers; 4 subunits per hexamer contact DNA at a time. Coordinated motions by a converter formed by DNA-disengaged RuvB subunits stimulates ATP hydrolysis and nucleotide exchange. Immobilization of the converter enables RuvB to convert the ATP-contained energy into a lever motion, pulling 2 nucleotides of DNA out of the RuvA tetramer per ATP hydrolyzed, thus driving DNA branch migration. The RuvB motors rotate together with the DNA substrate, which together with the progressing nucleotide cycle form the mechanistic basis for DNA recombination by continuous HJ branch migration. Branch migration allows RuvC to scan DNA until it finds its consensus sequence, where it cleaves and resolves cruciform DNA. The chain is Holliday junction branch migration complex subunit RuvB from Nitratidesulfovibrio vulgaris (strain ATCC 29579 / DSM 644 / CCUG 34227 / NCIMB 8303 / VKM B-1760 / Hildenborough) (Desulfovibrio vulgaris).